Consider the following 308-residue polypeptide: D-alanine--D-alanine ligase (308 aa).

The ATP-grasp domain maps to 104–301 (KQIWQGSDLP…FDELCVAILE (198 aa)). 130 to 185 (IAELGLPVIIKPVHEGSSVGMSKVEKAEDFAAAIEKATQHDAVVMAEKWITGREFT) lines the ATP pocket. Mg(2+) is bound by residues Asp-255, Glu-268, and Asn-270.

It belongs to the D-alanine--D-alanine ligase family. Requires Mg(2+) as cofactor. Mn(2+) serves as cofactor.

The protein resides in the cytoplasm. The catalysed reaction is 2 D-alanine + ATP = D-alanyl-D-alanine + ADP + phosphate + H(+). The protein operates within cell wall biogenesis; peptidoglycan biosynthesis. Cell wall formation. The polypeptide is D-alanine--D-alanine ligase (Acinetobacter baumannii (strain SDF)).